Reading from the N-terminus, the 217-residue chain is Ras-related protein Rab11B (217 aa).

21–28 (GDSGVGKS) lines the GTP pocket. The Effector region signature appears at 43–51 (SKSTIGVEF). GTP is bound by residues 69–73 (DTAGQ) and 127–130 (NKAD). S-geranylgeranyl cysteine attachment occurs at residues Cys214 and Cys215.

This sequence belongs to the small GTPase superfamily. Rab family.

Its subcellular location is the cell membrane. This chain is Ras-related protein Rab11B (RAB11B), found in Nicotiana tabacum (Common tobacco).